The primary structure comprises 149 residues: D-aminoacyl-tRNA deacylase (149 aa).

Positions 141 to 142 (GP) match the Gly-cisPro motif, important for rejection of L-amino acids motif.

This sequence belongs to the DTD family. Homodimer.

Its subcellular location is the cytoplasm. The enzyme catalyses glycyl-tRNA(Ala) + H2O = tRNA(Ala) + glycine + H(+). The catalysed reaction is a D-aminoacyl-tRNA + H2O = a tRNA + a D-alpha-amino acid + H(+). In terms of biological role, an aminoacyl-tRNA editing enzyme that deacylates mischarged D-aminoacyl-tRNAs. Also deacylates mischarged glycyl-tRNA(Ala), protecting cells against glycine mischarging by AlaRS. Acts via tRNA-based rather than protein-based catalysis; rejects L-amino acids rather than detecting D-amino acids in the active site. By recycling D-aminoacyl-tRNA to D-amino acids and free tRNA molecules, this enzyme counteracts the toxicity associated with the formation of D-aminoacyl-tRNA entities in vivo and helps enforce protein L-homochirality. The sequence is that of D-aminoacyl-tRNA deacylase from Hydrogenovibrio crunogenus (strain DSM 25203 / XCL-2) (Thiomicrospira crunogena).